We begin with the raw amino-acid sequence, 258 residues long: Gene 3 protein (258 aa).

Over residues 163 to 176 (STENLLGQTQSSTH) the composition is skewed to polar residues. Positions 163-258 (STENLLGQTQ…TRRYPPSFFK (96 aa)) are disordered. Positions 214–240 (SIREETVSGMARAREECNSPSEHDRLT) are enriched in basic and acidic residues.

The protein is Gene 3 protein of Equine herpesvirus 1 (strain Kentucky A) (EHV-1).